The following is a 118-amino-acid chain: uncharacterized protein (118 aa).

The first 22 residues, methionine 1–alanine 22, serve as a signal peptide directing secretion. The stretch at threonine 41–serine 71 forms a coiled coil.

This is an uncharacterized protein from Schizosaccharomyces pombe (strain 972 / ATCC 24843) (Fission yeast).